We begin with the raw amino-acid sequence, 596 residues long: Malto-oligosyltrehalose trehalohydrolase (596 aa).

263–268 (RLDAVH) lines the substrate pocket. Aspartate 265 serves as the catalytic Nucleophile. The active-site Proton donor is the glutamate 302. Residues 327–331 (DDFHH) and 397–402 (HDQIGN) each bind substrate.

Belongs to the glycosyl hydrolase 13 family.

The protein localises to the cytoplasm. It catalyses the reaction hydrolysis of (1-&gt;4)-alpha-D-glucosidic linkage in 4-alpha-D-[(1-&gt;4)-alpha-D-glucanosyl]n trehalose to yield trehalose and (1-&gt;4)-alpha-D-glucan.. It participates in glycan biosynthesis; trehalose biosynthesis. The polypeptide is Malto-oligosyltrehalose trehalohydrolase (treZ) (Rhizobium sp. (strain M-11)).